We begin with the raw amino-acid sequence, 122 residues long: Large ribosomal subunit protein uL14 (122 aa).

It belongs to the universal ribosomal protein uL14 family. Part of the 50S ribosomal subunit. Forms a cluster with proteins L3 and L19. In the 70S ribosome, L14 and L19 interact and together make contacts with the 16S rRNA in bridges B5 and B8.

Functionally, binds to 23S rRNA. Forms part of two intersubunit bridges in the 70S ribosome. This is Large ribosomal subunit protein uL14 from Brevibacillus brevis (strain 47 / JCM 6285 / NBRC 100599).